Reading from the N-terminus, the 437-residue chain is Nuclear hormone receptor family member nhr-100 (437 aa).

A DNA-binding region (nuclear receptor) is located at residues 21–96; it reads DTSCLVCGDP…VGMDANAVRS (76 aa). NR C4-type zinc fingers lie at residues 24–44 and 60–79; these read CLVCGDPHGKRHYGAMSCNGC and CSFNNECIIEFKYRNRCRAC. One can recognise an NR LBD domain in the interval 141-409; it reads QTKEIIAHML…SGGGLPYDIH (269 aa).

The protein belongs to the nuclear hormone receptor family.

Its subcellular location is the nucleus. Its function is as follows. Orphan nuclear receptor. The polypeptide is Nuclear hormone receptor family member nhr-100 (nhr-100) (Caenorhabditis elegans).